A 267-amino-acid chain; its full sequence is Hydroxyethylthiazole kinase (267 aa).

Substrate is bound at residue Met-46. ATP contacts are provided by Arg-121 and Thr-167. Residue Ala-194 coordinates substrate.

This sequence belongs to the Thz kinase family. The cofactor is Mg(2+).

The catalysed reaction is 5-(2-hydroxyethyl)-4-methylthiazole + ATP = 4-methyl-5-(2-phosphooxyethyl)-thiazole + ADP + H(+). It participates in cofactor biosynthesis; thiamine diphosphate biosynthesis; 4-methyl-5-(2-phosphoethyl)-thiazole from 5-(2-hydroxyethyl)-4-methylthiazole: step 1/1. In terms of biological role, catalyzes the phosphorylation of the hydroxyl group of 4-methyl-5-beta-hydroxyethylthiazole (THZ). This chain is Hydroxyethylthiazole kinase, found in Rhizobium johnstonii (strain DSM 114642 / LMG 32736 / 3841) (Rhizobium leguminosarum bv. viciae).